Here is a 208-residue protein sequence, read N- to C-terminus: Endoplasmic reticulum vesicle protein 25 (208 aa).

Positions 1-15 (MKFLLLLLLAPFISA) are cleaved as a signal peptide. At 16–177 (LRFDLKAESK…TNESTNERVR (162 aa)) the chain is on the lumenal side. A GOLD domain is found at 28-118 (QMCIRDFVSE…KRAIELDIES (91 aa)). Residues 178-198 (NFSVLVIIVLTSLGAWQVNYL) form a helical membrane-spanning segment. The Cytoplasmic segment spans residues 199-208 (KNYFKSKHII).

The protein belongs to the EMP24/GP25L family.

It is found in the endoplasmic reticulum membrane. It localises to the golgi apparatus membrane. Constituent of COPII-coated endoplasmic reticulum-derived transport vesicles. Required for efficient transport of a subset of secretory proteins to the Golgi. Facilitates retrograde transport from the Golgi to the endoplasmic reticulum. The sequence is that of Endoplasmic reticulum vesicle protein 25 (ERV25) from Candida glabrata (strain ATCC 2001 / BCRC 20586 / JCM 3761 / NBRC 0622 / NRRL Y-65 / CBS 138) (Yeast).